The chain runs to 585 residues: Trehalase (585 aa).

The first 32 residues, 1–32 (MAKTTPMAKPSVGLLTLQVLVFCALTGSLASA), serve as a signal peptide directing secretion. Residues R184 and 191–192 (WD) contribute to the substrate site. N207 carries an N-linked (GlcNAc...) asparagine glycan. Substrate-binding positions include N228, 237-239 (RSQ), 302-304 (RPE), and G336. The active-site Proton donor/acceptor is D338. N348 carries N-linked (GlcNAc...) asparagine glycosylation. Residue E535 is the Proton donor/acceptor of the active site. E550 serves as a coordination point for substrate.

It belongs to the glycosyl hydrolase 37 family. In terms of tissue distribution, expressed by the venom gland.

Its subcellular location is the secreted. It catalyses the reaction alpha,alpha-trehalose + H2O = alpha-D-glucose + beta-D-glucose. The sequence is that of Trehalase (tre1) from Pimpla hypochondriaca (Parasitoid wasp).